Here is a 141-residue protein sequence, read N- to C-terminus: ATP synthase epsilon chain (141 aa).

This sequence belongs to the ATPase epsilon chain family. As to quaternary structure, F-type ATPases have 2 components, CF(1) - the catalytic core - and CF(0) - the membrane proton channel. CF(1) has five subunits: alpha(3), beta(3), gamma(1), delta(1), epsilon(1). CF(0) has three main subunits: a, b and c.

The protein resides in the cell inner membrane. Produces ATP from ADP in the presence of a proton gradient across the membrane. This is ATP synthase epsilon chain from Aromatoleum aromaticum (strain DSM 19018 / LMG 30748 / EbN1) (Azoarcus sp. (strain EbN1)).